Here is a 165-residue protein sequence, read N- to C-terminus: Disulfide bond formation protein B (165 aa).

Residues 1 to 11 (MICSKVPVRAW) are Cytoplasmic-facing. The helical transmembrane segment at 12 to 28 (FATLGLGCLGLVAVGMA) threads the bilayer. Topologically, residues 29–46 (LQTLLHLAPCPLCIFQRL) are periplasmic. A disulfide bond links Cys38 and Cys41. Residues 47–61 (LYIMIGFVGLLGFVL) form a helical membrane-spanning segment. The Cytoplasmic portion of the chain corresponds to 62–66 (PAGRL). A helical membrane pass occupies residues 67-84 (LWSTLAAGLGVLGFGVAA). Over 85 to 142 (YQTWMQAFPDLAPECGFTDPNAIERLVDWLGMEWPSMFLATGFCTSRDWELLGLSMAN) the chain is Periplasmic. Residues Cys99 and Cys128 are joined by a disulfide bond. A helical transmembrane segment spans residues 143–161 (WSVLIFAGIVAYAVLLFVR). Topologically, residues 162–165 (KDRA) are cytoplasmic.

Belongs to the DsbB family.

It is found in the cell inner membrane. Required for disulfide bond formation in some periplasmic proteins. Acts by oxidizing the DsbA protein. This is Disulfide bond formation protein B from Dechloromonas aromatica (strain RCB).